A 324-amino-acid chain; its full sequence is Phospho-N-acetylmuramoyl-pentapeptide-transferase (324 aa).

10 helical membrane passes run 5 to 25 (GLLVTAGVAFLISVALSPLFI), 52 to 72 (PTMGGIVIYVSMMVTTLIMAI), 77 to 97 (LGAEVSLLLLVTFGYGLIGFL), 117 to 137 (LLGQLIIAIAFFAIAKGQGFD), 147 to 167 (ITFDLYWAYFILVLFMLIGGS), 176 to 196 (LDGLLSGTAAIAFGAFSIIAV), 202 to 222 (AVAIFCMAVVGAVLGFLVFNA), 227 to 247 (VFMGDTGSLALGGAIAAVAIL), 253 to 273 (LLVIIGGVFVMETLSVIIQVI), and 302 to 322 (VVVTFWSVGFLLAVLGIYIGV).

This sequence belongs to the glycosyltransferase 4 family. MraY subfamily. Mg(2+) is required as a cofactor.

Its subcellular location is the cell membrane. It catalyses the reaction UDP-N-acetyl-alpha-D-muramoyl-L-alanyl-gamma-D-glutamyl-meso-2,6-diaminopimeloyl-D-alanyl-D-alanine + di-trans,octa-cis-undecaprenyl phosphate = di-trans,octa-cis-undecaprenyl diphospho-N-acetyl-alpha-D-muramoyl-L-alanyl-D-glutamyl-meso-2,6-diaminopimeloyl-D-alanyl-D-alanine + UMP. It functions in the pathway cell wall biogenesis; peptidoglycan biosynthesis. Functionally, catalyzes the initial step of the lipid cycle reactions in the biosynthesis of the cell wall peptidoglycan: transfers peptidoglycan precursor phospho-MurNAc-pentapeptide from UDP-MurNAc-pentapeptide onto the lipid carrier undecaprenyl phosphate, yielding undecaprenyl-pyrophosphoryl-MurNAc-pentapeptide, known as lipid I. The polypeptide is Phospho-N-acetylmuramoyl-pentapeptide-transferase (Bacillus cytotoxicus (strain DSM 22905 / CIP 110041 / 391-98 / NVH 391-98)).